The sequence spans 768 residues: DNA replication licensing factor MCM3 homolog 1 (768 aa).

The MCM domain maps to 290 to 497 (TFDLLGNSLA…IDRQISEHVA (208 aa)). 340–347 (GDPSVAKS) serves as a coordination point for ATP. Positions 472–475 (SRFD) match the Arginine finger motif. The disordered stretch occupies residues 662–687 (MKQQAEHDAGATGGTVDGHGSSGNDP). The segment covering 672-682 (ATGGTVDGHGS) has biased composition (gly residues).

Belongs to the MCM family.

The protein resides in the nucleus. The catalysed reaction is ATP + H2O = ADP + phosphate + H(+). Its function is as follows. Acts as a factor that allows the DNA to undergo a single round of replication per cell cycle. Required for DNA replication and cell proliferation. May act as a component of the MCM complex which is the putative replicative helicase of the replication licensing system in eukaryotic cells. This chain is DNA replication licensing factor MCM3 homolog 1 (ROA1), found in Zea mays (Maize).